We begin with the raw amino-acid sequence, 367 residues long: DNA replication and repair protein RecF (367 aa).

ATP is bound at residue 30 to 37; it reads GANGSGKT.

The protein belongs to the RecF family.

It is found in the cytoplasm. Its function is as follows. The RecF protein is involved in DNA metabolism; it is required for DNA replication and normal SOS inducibility. RecF binds preferentially to single-stranded, linear DNA. It also seems to bind ATP. The chain is DNA replication and repair protein RecF from Pseudomonas entomophila (strain L48).